The primary structure comprises 176 residues: NAD(P)H-quinone oxidoreductase subunit 6, chloroplastic (176 aa).

5 helical membrane-spanning segments follow: residues 10–30 (FLLV…VLLT), 32–52 (PIFS…FYIL), 61–81 (AQLL…VMFM), 95–115 (VGNG…ITII), and 152–172 (FFLP…GAIA).

It belongs to the complex I subunit 6 family. In terms of assembly, NDH is composed of at least 16 different subunits, 5 of which are encoded in the nucleus.

The protein localises to the plastid. Its subcellular location is the chloroplast thylakoid membrane. The catalysed reaction is a plastoquinone + NADH + (n+1) H(+)(in) = a plastoquinol + NAD(+) + n H(+)(out). It catalyses the reaction a plastoquinone + NADPH + (n+1) H(+)(in) = a plastoquinol + NADP(+) + n H(+)(out). Functionally, NDH shuttles electrons from NAD(P)H:plastoquinone, via FMN and iron-sulfur (Fe-S) centers, to quinones in the photosynthetic chain and possibly in a chloroplast respiratory chain. The immediate electron acceptor for the enzyme in this species is believed to be plastoquinone. Couples the redox reaction to proton translocation, and thus conserves the redox energy in a proton gradient. The chain is NAD(P)H-quinone oxidoreductase subunit 6, chloroplastic (ndhG) from Populus alba (White poplar).